The primary structure comprises 183 residues: Beta-defensin 129 (183 aa).

Positions 1-19 (MKLLFPIFASLMLQYQVNT) are cleaved as a signal peptide. 3 disulfides stabilise this stretch: cysteine 27-cysteine 53, cysteine 34-cysteine 48, and cysteine 38-cysteine 54. A disordered region spans residues 141–183 (TATSTKSNTKESRDSATASSPPAPPPPNILPTPSLELEEAEEQ). The segment covering 161–170 (PPAPPPPNIL) has biased composition (pro residues).

This sequence belongs to the beta-defensin family.

The protein localises to the secreted. Its function is as follows. Has antibacterial activity. This chain is Beta-defensin 129 (DEFB129), found in Gorilla gorilla gorilla (Western lowland gorilla).